Here is a 339-residue protein sequence, read N- to C-terminus: Ferrochelatase (339 aa).

Residues histidine 202 and glutamate 283 each coordinate Fe cation.

The protein belongs to the ferrochelatase family.

It localises to the cytoplasm. The enzyme catalyses heme b + 2 H(+) = protoporphyrin IX + Fe(2+). Its pathway is porphyrin-containing compound metabolism; protoheme biosynthesis; protoheme from protoporphyrin-IX: step 1/1. Its function is as follows. Catalyzes the ferrous insertion into protoporphyrin IX. The chain is Ferrochelatase from Psychrobacter sp. (strain PRwf-1).